Here is a 172-residue protein sequence, read N- to C-terminus: NADH-quinone oxidoreductase subunit B (172 aa).

Residues Cys46, Cys47, Cys111, and Cys141 each contribute to the [4Fe-4S] cluster site.

Belongs to the complex I 20 kDa subunit family. As to quaternary structure, NDH-1 is composed of 14 different subunits. Subunits NuoB, C, D, E, F, and G constitute the peripheral sector of the complex. It depends on [4Fe-4S] cluster as a cofactor.

The protein localises to the cell membrane. It carries out the reaction a quinone + NADH + 5 H(+)(in) = a quinol + NAD(+) + 4 H(+)(out). In terms of biological role, NDH-1 shuttles electrons from NADH, via FMN and iron-sulfur (Fe-S) centers, to quinones in the respiratory chain. The immediate electron acceptor for the enzyme in this species is believed to be a menaquinone. Couples the redox reaction to proton translocation (for every two electrons transferred, four hydrogen ions are translocated across the cytoplasmic membrane), and thus conserves the redox energy in a proton gradient. This is NADH-quinone oxidoreductase subunit B from Brevibacillus brevis (strain 47 / JCM 6285 / NBRC 100599).